The chain runs to 429 residues: Phosphomethylpyrimidine synthase 1 (429 aa).

Residues asparagine 65, methionine 94, tyrosine 123, histidine 162, serine 184–glycine 186, aspartate 225–arginine 228, and glutamate 264 contribute to the substrate site. Position 268 (histidine 268) interacts with Zn(2+). Residue tyrosine 291 coordinates substrate. Zn(2+) is bound at residue histidine 332. Cysteine 408, cysteine 411, and cysteine 415 together coordinate [4Fe-4S] cluster.

This sequence belongs to the ThiC family. Requires [4Fe-4S] cluster as cofactor.

It carries out the reaction 5-amino-1-(5-phospho-beta-D-ribosyl)imidazole + S-adenosyl-L-methionine = 4-amino-2-methyl-5-(phosphooxymethyl)pyrimidine + CO + 5'-deoxyadenosine + formate + L-methionine + 3 H(+). It participates in cofactor biosynthesis; thiamine diphosphate biosynthesis. Functionally, catalyzes the synthesis of the hydroxymethylpyrimidine phosphate (HMP-P) moiety of thiamine from aminoimidazole ribotide (AIR) in a radical S-adenosyl-L-methionine (SAM)-dependent reaction. The polypeptide is Phosphomethylpyrimidine synthase 1 (Methanosphaera stadtmanae (strain ATCC 43021 / DSM 3091 / JCM 11832 / MCB-3)).